An 80-amino-acid polypeptide reads, in one-letter code: Cell division protein ZapB (80 aa).

Residues Phe-3–Asn-80 are a coiled coil.

It belongs to the ZapB family. As to quaternary structure, homodimer. The ends of the coiled-coil dimer bind to each other, forming polymers. Interacts with FtsZ.

It localises to the cytoplasm. Its function is as follows. Non-essential, abundant cell division factor that is required for proper Z-ring formation. It is recruited early to the divisome by direct interaction with FtsZ, stimulating Z-ring assembly and thereby promoting cell division earlier in the cell cycle. Its recruitment to the Z-ring requires functional FtsA or ZipA. In Edwardsiella ictaluri (strain 93-146), this protein is Cell division protein ZapB.